A 120-amino-acid polypeptide reads, in one-letter code: UPF0102 protein Caur_2698 (120 aa).

It belongs to the UPF0102 family.

This Chloroflexus aurantiacus (strain ATCC 29366 / DSM 635 / J-10-fl) protein is UPF0102 protein Caur_2698.